Consider the following 53-residue polypeptide: DVEPLLGFLSPKSGQENEVDDFPYKGQGELXXGIVEQCCHKPCNIFDLQNYCN.

The propeptide at 1 to 30 (DVEPLLGFLSPKSGQENEVDDFPYKGQGEL) is c peptide. A disulfide bridge connects residues Cys-38 and Cys-43.

The protein belongs to the insulin family. Heterodimer of a B chain and an A chain linked by two disulfide bonds.

It localises to the secreted. In terms of biological role, insulin decreases blood glucose concentration. It increases cell permeability to monosaccharides, amino acids and fatty acids. It accelerates glycolysis, the pentose phosphate cycle, and glycogen synthesis in liver. The sequence is that of Insulin (ins) from Anguilla anguilla (European freshwater eel).